The following is a 337-amino-acid chain: 2-oxoglutarate-Fe(II) type oxidoreductase (337 aa).

The 104-residue stretch at 179-282 folds into the Fe2OG dioxygenase domain; the sequence is AIATLRYLHY…RYSIPFFFTG (104 aa). Fe cation contacts are provided by His-205, Asp-207, and His-263. 2-oxoglutarate is bound at residue Arg-273.

Belongs to the iron/ascorbate-dependent oxidoreductase family. Fe(2+) is required as a cofactor. Endocrocin is specifically produced in conidia.

It functions in the pathway secondary metabolite biosynthesis. In terms of biological role, 2-oxoglutarate-Fe(II) type oxidoreductase; part of the gene cluster that mediates the biosynthesis of endocrocin, a simple anthraquinone interesting for many biotechnological applications. The pathway begins with the synthesis of atrochrysone thioester by the polyketide synthase (PKS) encA. The atrochrysone carboxyl ACP thioesterase encB then breaks the thioester bond and releases the atrochrysone carboxylic acid from encA. The atrochrysone carboxylic acid is then converted to endocrocin anthrone which is further oxidized into endocrocin by encC. The exact function of encD has not been identified yet, but it negatively regulates endocrocin production, likely through the modification of endocrocin itself. The sequence is that of 2-oxoglutarate-Fe(II) type oxidoreductase from Aspergillus fumigatus (strain ATCC MYA-4609 / CBS 101355 / FGSC A1100 / Af293) (Neosartorya fumigata).